Reading from the N-terminus, the 180-residue chain is MMPRLQEKYEKEVVSALMDKFGYKNIMEVPKLEKIVINMGVGEAKENQKALEAAVEDLAKITGQKPILTKAKKSVANFKIRENMPLGCKVTLRKQNMYEFADKLINVALPRVRDFSGVSSKSFDGRGNYAIGIKEQLIFPEIEFDKIDKIRGMDIIFVTTAKTDEEARELLRFLGMPFAR.

This sequence belongs to the universal ribosomal protein uL5 family. Part of the 50S ribosomal subunit; part of the 5S rRNA/L5/L18/L25 subcomplex. Contacts the 5S rRNA and the P site tRNA. Forms a bridge to the 30S subunit in the 70S ribosome.

Its function is as follows. This is one of the proteins that bind and probably mediate the attachment of the 5S RNA into the large ribosomal subunit, where it forms part of the central protuberance. In the 70S ribosome it contacts protein S13 of the 30S subunit (bridge B1b), connecting the 2 subunits; this bridge is implicated in subunit movement. Contacts the P site tRNA; the 5S rRNA and some of its associated proteins might help stabilize positioning of ribosome-bound tRNAs. The polypeptide is Large ribosomal subunit protein uL5 (Clostridium botulinum (strain Loch Maree / Type A3)).